We begin with the raw amino-acid sequence, 144 residues long: Large ribosomal subunit protein uL13 (144 aa).

The protein belongs to the universal ribosomal protein uL13 family. As to quaternary structure, part of the 50S ribosomal subunit.

This protein is one of the early assembly proteins of the 50S ribosomal subunit, although it is not seen to bind rRNA by itself. It is important during the early stages of 50S assembly. The protein is Large ribosomal subunit protein uL13 of Heliobacterium modesticaldum (strain ATCC 51547 / Ice1).